The chain runs to 356 residues: UDP-N-acetylglucosamine--N-acetylmuramyl-(pentapeptide) pyrophosphoryl-undecaprenol N-acetylglucosamine transferase (356 aa).

UDP-N-acetyl-alpha-D-glucosamine is bound by residues threonine 12 to glycine 14, asparagine 124, arginine 163, serine 188, isoleucine 242, and glutamine 287.

Belongs to the glycosyltransferase 28 family. MurG subfamily.

The protein localises to the cell inner membrane. The catalysed reaction is di-trans,octa-cis-undecaprenyl diphospho-N-acetyl-alpha-D-muramoyl-L-alanyl-D-glutamyl-meso-2,6-diaminopimeloyl-D-alanyl-D-alanine + UDP-N-acetyl-alpha-D-glucosamine = di-trans,octa-cis-undecaprenyl diphospho-[N-acetyl-alpha-D-glucosaminyl-(1-&gt;4)]-N-acetyl-alpha-D-muramoyl-L-alanyl-D-glutamyl-meso-2,6-diaminopimeloyl-D-alanyl-D-alanine + UDP + H(+). The protein operates within cell wall biogenesis; peptidoglycan biosynthesis. Cell wall formation. Catalyzes the transfer of a GlcNAc subunit on undecaprenyl-pyrophosphoryl-MurNAc-pentapeptide (lipid intermediate I) to form undecaprenyl-pyrophosphoryl-MurNAc-(pentapeptide)GlcNAc (lipid intermediate II). The protein is UDP-N-acetylglucosamine--N-acetylmuramyl-(pentapeptide) pyrophosphoryl-undecaprenol N-acetylglucosamine transferase of Pseudomonas fluorescens (strain Pf0-1).